Reading from the N-terminus, the 323-residue chain is AA9 family lytic polysaccharide monooxygenase B (323 aa).

The first 18 residues, 1–18, serve as a signal peptide directing secretion; the sequence is MKSFTLTTLAALAGNAAA. Cu(2+) contacts are provided by H19 and H97. Residues C56 and C191 are joined by a disulfide bond. O2-binding residues include H177 and Q186. Y188 lines the Cu(2+) pocket. Residues 286–323 form the CBM1 domain; it reads CTVQKYQQCGGQGYTGCTNCASGSTCSAVSPPYYSQCV.

This sequence belongs to the polysaccharide monooxygenase AA9 family. Requires Cu(2+) as cofactor.

It is found in the secreted. The enzyme catalyses [(1-&gt;4)-beta-D-glucosyl]n+m + reduced acceptor + O2 = 4-dehydro-beta-D-glucosyl-[(1-&gt;4)-beta-D-glucosyl]n-1 + [(1-&gt;4)-beta-D-glucosyl]m + acceptor + H2O.. Is able to utilize various natural phenolic compounds as reducing agents. Most of these reducing agents are present in plants, either free or as lignin building blocks, such as sinapic acid, or as flavonoids such as catechin and dopamine. Phenolic compounds with 1,2-benzenediol and 1,2,3-benzenetriol moieties yield the highest release of oxidized and non-oxidized glucooligosaccharides from cellulose compared to monophenols or sulfur-containing compounds. Lytic polysaccharide monooxygenase (LPMO) that depolymerizes crystalline and amorphous polysaccharides via the oxidation of scissile alpha- or beta-(1-4)-glycosidic bonds, yielding C1 oxidation products. Catalysis by LPMOs requires the reduction of the active-site copper from Cu(II) to Cu(I) by a reducing agent and H(2)O(2) or O(2) as a cosubstrate. Is active on regenerated amorphous cellulose (RAC). In Thermothelomyces thermophilus (strain ATCC 42464 / BCRC 31852 / DSM 1799) (Sporotrichum thermophile), this protein is AA9 family lytic polysaccharide monooxygenase B.